The chain runs to 130 residues: Hypocretin neuropeptide precursor (130 aa).

An N-terminal signal peptide occupies residues 1 to 32; that stretch reads MNPPSTKVPWAAVTLLLLLLLPPALLSPGAAA. A Pyrrolidone carboxylic acid modification is found at glutamine 33. 2 disulfides stabilise this stretch: cysteine 38–cysteine 44 and cysteine 39–cysteine 46. Leucine 65 carries the leucine amide modification. Methionine 96 carries the post-translational modification Methionine amide. The propeptide at 97-130 is removed in mature form; sequence GRRAGAEPAPRPCPGRRCPVVAVPSAAPGGRSGV.

It belongs to the orexin family. Post-translationally, specific enzymatic cleavages at paired basic residues yield the different active peptides.

It is found in the rough endoplasmic reticulum. It localises to the cytoplasmic vesicle. The protein localises to the synapse. Its function is as follows. Neuropeptides that play a significant role in the regulation of food intake and sleep-wakefulness, possibly by coordinating the complex behavioral and physiologic responses of these complementary homeostatic functions. A broader role in the homeostatic regulation of energy metabolism, autonomic function, hormonal balance and the regulation of body fluids, is also suggested. Functionally, binds to orexin receptors HCRTR1/OX1R and HCRTR2/OX2R with a high affinity. Stimulates food intake. Modulates pituitary luteinizing hormone secretion in an ovarian steroid-dependent manner. In terms of biological role, binds to orexin receptor HCRTR2/OX2R only. Stimulates food intake. Modulates pituitary luteinizing hormone secretion in an ovarian steroid-dependent manner. This Canis lupus familiaris (Dog) protein is Hypocretin neuropeptide precursor (HCRT).